A 422-amino-acid chain; its full sequence is Histidine--tRNA ligase (422 aa).

It belongs to the class-II aminoacyl-tRNA synthetase family. In terms of assembly, homodimer.

The protein resides in the cytoplasm. It catalyses the reaction tRNA(His) + L-histidine + ATP = L-histidyl-tRNA(His) + AMP + diphosphate + H(+). This chain is Histidine--tRNA ligase, found in Vibrio cholerae serotype O1 (strain ATCC 39541 / Classical Ogawa 395 / O395).